Reading from the N-terminus, the 412-residue chain is AT-rich interactive domain-containing protein 3C (412 aa).

Positions 1 to 23 (MEALQKQQAARLAQGVGPLAPAC) are enriched in low complexity. Residues 1 to 96 (MEALQKQQAA…SSQPPGLHPH (96 aa)) are disordered. A compositionally biased stretch (acidic residues) spans 50 to 73 (AEEEEDAEEDEEKREEAGAEEEAA). The segment covering 78–87 (PGAQGPSSPS) has biased composition (low complexity). The 93-residue stretch at 113–205 (DPKRKEFLDD…YLYPYECETR (93 aa)) folds into the ARID domain. Disordered stretches follow at residues 232-278 (TPLF…AHAC) and 388-412 (PVPASQGPTNPAPPPSTGPPSSILP). A compositionally biased stretch (polar residues) spans 259-272 (TQSSPGPAQGSTSG). Positions 304–389 (LALGPTREKL…GVLFARRQPV (86 aa)) constitute an REKLES domain.

As to quaternary structure, interacts (via REKLES DOMAIN) with NPM1; the interaction mediates ARID3C nuclear shuttling.

The protein resides in the nucleus. In terms of biological role, transcription factor involved in monocyte-to-macrophage differentiation. Forms a complex with NPM1 to translocate to the nucleus, acting as a transcription factor that promotes the expression of the genes involved in macrophage differentiation, such as STAT3, STAT1 and JUNB. This chain is AT-rich interactive domain-containing protein 3C, found in Homo sapiens (Human).